The chain runs to 139 residues: Nucleoside diphosphate kinase (139 aa).

ATP contacts are provided by lysine 9, phenylalanine 57, arginine 85, threonine 91, arginine 102, and asparagine 112. Residue histidine 115 is the Pros-phosphohistidine intermediate of the active site.

The protein belongs to the NDK family. Homotetramer. Mg(2+) is required as a cofactor.

It is found in the cytoplasm. It catalyses the reaction a 2'-deoxyribonucleoside 5'-diphosphate + ATP = a 2'-deoxyribonucleoside 5'-triphosphate + ADP. The enzyme catalyses a ribonucleoside 5'-diphosphate + ATP = a ribonucleoside 5'-triphosphate + ADP. Functionally, major role in the synthesis of nucleoside triphosphates other than ATP. The ATP gamma phosphate is transferred to the NDP beta phosphate via a ping-pong mechanism, using a phosphorylated active-site intermediate. The sequence is that of Nucleoside diphosphate kinase from Neorickettsia sennetsu (strain ATCC VR-367 / Miyayama) (Ehrlichia sennetsu).